The chain runs to 102 residues: 10 kDa heat shock protein, mitochondrial (102 aa).

Alanine 2 carries the post-translational modification N-acetylalanine. The residue at position 8 (lysine 8) is an N6-acetyllysine. The residue at position 28 (lysine 28) is an N6-succinyllysine. The residue at position 40 (lysine 40) is an N6-acetyllysine; alternate. Lysine 40, lysine 54, and lysine 56 each carry N6-malonyllysine; alternate. 5 positions are modified to N6-succinyllysine; alternate: lysine 40, lysine 54, lysine 56, lysine 66, and lysine 70. Residues lysine 56, lysine 66, and lysine 70 each carry the N6-acetyllysine; alternate modification. Position 79 is a phosphothreonine (threonine 79). Residues lysine 80 and lysine 86 each carry the N6-acetyllysine; alternate modification. N6-succinyllysine; alternate occurs at positions 80 and 86. Residue lysine 99 is modified to N6-acetyllysine.

Belongs to the GroES chaperonin family. In terms of assembly, homoheptamer arranged in a ring structure. 2 heptameric Hsp10 rings interact with a Hsp60 tetradecamer in the structure of a back-to-back double heptameric ring to form the symmetrical football complex.

The protein resides in the mitochondrion matrix. Its function is as follows. Co-chaperonin implicated in mitochondrial protein import and macromolecular assembly. Together with Hsp60, facilitates the correct folding of imported proteins. May also prevent misfolding and promote the refolding and proper assembly of unfolded polypeptides generated under stress conditions in the mitochondrial matrix. The functional units of these chaperonins consist of heptameric rings of the large subunit Hsp60, which function as a back-to-back double ring. In a cyclic reaction, Hsp60 ring complexes bind one unfolded substrate protein per ring, followed by the binding of ATP and association with 2 heptameric rings of the co-chaperonin Hsp10. This leads to sequestration of the substrate protein in the inner cavity of Hsp60 where, for a certain period of time, it can fold undisturbed by other cell components. Synchronous hydrolysis of ATP in all Hsp60 subunits results in the dissociation of the chaperonin rings and the release of ADP and the folded substrate protein. The protein is 10 kDa heat shock protein, mitochondrial (Hspe1) of Rattus norvegicus (Rat).